We begin with the raw amino-acid sequence, 508 residues long: UDP-N-acetylmuramyl-tripeptide synthetase (508 aa).

Position 35 (Ser35) interacts with UDP-N-acetyl-alpha-D-muramoyl-L-alanyl-D-glutamate. 118-124 is an ATP binding site; that stretch reads GTDGKSS. Residues 163–164, Thr190, and Arg200 contribute to the UDP-N-acetyl-alpha-D-muramoyl-L-alanyl-D-glutamate site; that span reads ST. Lys232 is modified (N6-carboxylysine).

Belongs to the MurCDEF family. MurE subfamily. Post-translationally, carboxylation is probably crucial for Mg(2+) binding and, consequently, for the gamma-phosphate positioning of ATP.

Its subcellular location is the cytoplasm. It participates in cell wall biogenesis; peptidoglycan biosynthesis. Catalyzes the addition of an amino acid to the nucleotide precursor UDP-N-acetylmuramoyl-L-alanyl-D-glutamate (UMAG) in the biosynthesis of bacterial cell-wall peptidoglycan. The sequence is that of UDP-N-acetylmuramyl-tripeptide synthetase from Borreliella burgdorferi (strain ATCC 35210 / DSM 4680 / CIP 102532 / B31) (Borrelia burgdorferi).